The chain runs to 1370 residues: Insulin-like growth factor 1 receptor (1370 aa).

Residues 1–30 form the signal peptide; the sequence is MKSGSGGGSPTSLWGLVFLSAALSLWPTSG. Cysteine 33 and cysteine 52 form a disulfide bridge. 3 N-linked (GlcNAc...) asparagine glycosylation sites follow: asparagine 51, asparagine 102, and asparagine 135. 13 cysteine pairs are disulfide-bonded: cysteine 150–cysteine 178, cysteine 182–cysteine 205, cysteine 192–cysteine 211, cysteine 215–cysteine 224, cysteine 219–cysteine 230, cysteine 231–cysteine 239, cysteine 235–cysteine 248, cysteine 251–cysteine 260, cysteine 264–cysteine 276, cysteine 282–cysteine 303, cysteine 307–cysteine 321, cysteine 324–cysteine 328, and cysteine 332–cysteine 354. Asparagine 245 is a glycosylation site (N-linked (GlcNAc...) asparagine). Residue asparagine 314 is glycosylated (N-linked (GlcNAc...) asparagine). N-linked (GlcNAc...) asparagine glycans are attached at residues asparagine 418 and asparagine 439. Cysteine 456 and cysteine 489 form a disulfide bridge. 2 consecutive Fibronectin type-III domains span residues 490–610 and 611–709; these read ESDV…TNAS and VPSI…TEAE. Asparagine 535, asparagine 608, asparagine 623, asparagine 641, asparagine 748, asparagine 757, asparagine 765, asparagine 901, and asparagine 914 each carry an N-linked (GlcNAc...) asparagine glycan. Residues 742 to 936 are Extracellular-facing; it reads DVLQVANTTM…AKTTYENFMH (195 aa). The Fibronectin type-III 3 domain occupies 835-928; sequence IPGPVTWEPR…DPVFFYVPAK (94 aa). The helical transmembrane segment at 937-960 threads the bilayer; that stretch reads LIIALPVAILLIVGGLVIMLYVFH. Topologically, residues 961-1370 are cytoplasmic; sequence RKRNNSRLGN…ALPLPQSSTC (410 aa). Residues 978–981 carry the IRS1- and SHC1-binding motif; it reads NPEY. The residue at position 981 (tyrosine 981) is a Phosphotyrosine. A Protein kinase domain is found at 1000–1275; sequence ITMNRELGQG…SIKDEMEPSF (276 aa). Residues 1006-1014 and lysine 1034 contribute to the ATP site; that span reads LGQGSFGMV. Aspartate 1136 (proton acceptor) is an active-site residue. Residues tyrosine 1162, tyrosine 1166, and tyrosine 1167 each carry the phosphotyrosine; by autocatalysis modification. Residues lysine 1169 and lysine 1172 each participate in a glycyl lysine isopeptide (Lys-Gly) (interchain with G-Cter in ubiquitin) cross-link. Serine 1279 bears the Phosphoserine; by GSK3-beta mark. Residue serine 1283 is modified to Phosphoserine. Positions 1304 to 1370 are disordered; that stretch reads NMESVPLDPS…ALPLPQSSTC (67 aa). Positions 1305–1321 are enriched in low complexity; sequence MESVPLDPSASSASLPL. Residues 1322-1331 show a composition bias toward basic and acidic residues; sequence PERHSGHKAE.

The protein belongs to the protein kinase superfamily. Tyr protein kinase family. Insulin receptor subfamily. Tetramer of 2 alpha and 2 beta chains linked by disulfide bonds. The alpha chains contribute to the formation of the ligand-binding domain, while the beta chain carries the kinase domain. Interacts with PIK3R1 and with the PTB/PID domains of IRS1 and SHC1 in vitro when autophosphorylated on tyrosine residues. Forms a hybrid receptor with INSR, the hybrid is a tetramer consisting of 1 alpha chain and 1 beta chain of INSR and 1 alpha chain and 1 beta chain of IGF1R. Interacts with ARRB1 and ARRB2. Interacts with GRB10. Interacts with RACK1. Interacts with SOCS1, SOCS2 and SOCS3. Interacts with 14-3-3 proteins. Interacts with NMD2. Interacts with MAP3K5. Interacts with STAT3. Found in a ternary complex with IGF1 and ITGAV:ITGB3 or ITGA6:ITGB4. Interacts (nascent precursor form) with ZFAND2B. Autophosphorylated on tyrosine residues in response to ligand binding. Autophosphorylation occurs in trans, i.e. one subunit of the dimeric receptor phosphorylates tyrosine residues on the other subunit. Autophosphorylation occurs in a sequential manner; Tyr-1166 is predominantly phosphorylated first, followed by phosphorylation of Tyr-1162 and Tyr-1167. While every single phosphorylation increases kinase activity, all three tyrosine residues in the kinase activation loop (Tyr-1162, Tyr-1166 and Tyr-1167) have to be phosphorylated for optimal activity. Can be autophosphorylated at additional tyrosine residues (in vitro). Autophosphorylated is followed by phosphorylation of juxtamembrane tyrosines and C-terminal serines. May also be phosphorylated at Tyr-1162 and Tyr-1167 by mTORC2. Phosphorylation of Tyr-981 is required for IRS1- and SHC1-binding. Phosphorylation of Ser-1279 by GSK-3beta restrains kinase activity and promotes cell surface expression, it requires a priming phosphorylation at Ser-1283. Dephosphorylated by PTPN1. In terms of processing, polyubiquitinated at Lys-1169 and Lys-1172 through both 'Lys-48' and 'Lys-29' linkages, promoting receptor endocytosis and subsequent degradation by the proteasome. Ubiquitination is facilitated by pre-existing phosphorylation. Post-translationally, sumoylated with SUMO1. Controlled by regulated intramembrane proteolysis (RIP). Undergoes metalloprotease-dependent constitutive ectodomain shedding to produce a membrane-anchored 52 kDa C-Terminal fragment which is further processed by presenilin gamma-secretase to yield an intracellular 50 kDa fragment.

Its subcellular location is the cell membrane. The enzyme catalyses L-tyrosyl-[protein] + ATP = O-phospho-L-tyrosyl-[protein] + ADP + H(+). Its activity is regulated as follows. Activated by autophosphorylation at Tyr-1162, Tyr-1166 and Tyr-1167 on the kinase activation loop; phosphorylation at all three tyrosine residues is required for optimal kinase activity. Inhibited by MSC1609119A-1, BMS-754807, PQIP, benzimidazole pyridinone, isoquinolinedione, bis-azaindole, 3-cyanoquinoline, 2,4-bis-arylamino-1,3-pyrimidine, pyrrolopyrimidine, pyrrole-5-carboxaldehyde, picropodophyllin (PPP), tyrphostin derivatives. While most inhibitors bind to the ATP binding pocket, MSC1609119A-1 functions as allosteric inhibitor and binds close to the DFG motif and the activation loop. Dephosphorylated by PTPN1. Its function is as follows. Receptor tyrosine kinase which mediates actions of insulin-like growth factor 1 (IGF1). Binds IGF1 with high affinity and IGF2 and insulin (INS) with a lower affinity. The activated IGF1R is involved in cell growth and survival control. IGF1R is crucial for tumor transformation and survival of malignant cell. Ligand binding activates the receptor kinase, leading to receptor autophosphorylation, and tyrosines phosphorylation of multiple substrates, that function as signaling adapter proteins including, the insulin-receptor substrates (IRS1/2), Shc and 14-3-3 proteins. Phosphorylation of IRSs proteins lead to the activation of two main signaling pathways: the PI3K-AKT/PKB pathway and the Ras-MAPK pathway. The result of activating the MAPK pathway is increased cellular proliferation, whereas activating the PI3K pathway inhibits apoptosis and stimulates protein synthesis. Phosphorylated IRS1 can activate the 85 kDa regulatory subunit of PI3K (PIK3R1), leading to activation of several downstream substrates, including protein AKT/PKB. AKT phosphorylation, in turn, enhances protein synthesis through mTOR activation and triggers the antiapoptotic effects of IGFIR through phosphorylation and inactivation of BAD. In parallel to PI3K-driven signaling, recruitment of Grb2/SOS by phosphorylated IRS1 or Shc leads to recruitment of Ras and activation of the ras-MAPK pathway. In addition to these two main signaling pathways IGF1R signals also through the Janus kinase/signal transducer and activator of transcription pathway (JAK/STAT). Phosphorylation of JAK proteins can lead to phosphorylation/activation of signal transducers and activators of transcription (STAT) proteins. In particular activation of STAT3, may be essential for the transforming activity of IGF1R. The JAK/STAT pathway activates gene transcription and may be responsible for the transforming activity. JNK kinases can also be activated by the IGF1R. IGF1 exerts inhibiting activities on JNK activation via phosphorylation and inhibition of MAP3K5/ASK1, which is able to directly associate with the IGF1R. When present in a hybrid receptor with INSR, binds IGF1. In Rattus norvegicus (Rat), this protein is Insulin-like growth factor 1 receptor (Igf1r).